The sequence spans 546 residues: Cryptochrome DASH, chloroplastic/mitochondrial (546 aa).

The Photolyase/cryptochrome alpha/beta domain maps to 4-151 (TRVVIWFRND…TMERHWGSTL (148 aa)). A disordered region spans residues 497 to 546 (PRRDFTEMGSPPGPRRGGGGGGRGRGRPGGSTPNRGTKARVASVYDTVYG). Over residues 511-525 (RRGGGGGGRGRGRPG) the composition is skewed to gly residues.

The protein belongs to the DNA photolyase class-1 family. It depends on FAD as a cofactor. The cofactor is (6R)-5,10-methylene-5,6,7,8-tetrahydrofolate.

It localises to the plastid. It is found in the chloroplast. The protein localises to the mitochondrion. In terms of biological role, may have a photoreceptor function. Binds ss- and ds-DNA in a sequence non-specific manner, lacks photolyase activity. The protein is Cryptochrome DASH, chloroplastic/mitochondrial of Ostreococcus tauri.